The primary structure comprises 852 residues: Disease resistance RPP13-like protein 4 (852 aa).

Residues 17-68 (LEEKGRTVSDYRKQLEDLQSELKYMQSFLKDAERQKRTNETLRTLVADLREL) are a coiled coil. ADP-binding positions include R149, V161, 189–196 (GMGGLGKT), R297, and K363. The region spanning 164–410 (EGDKRKIKEW…MSSLQLSYDE (247 aa)) is the NB-ARC domain. 6 LRR repeats span residues 558-581 (CKYL…ILDE), 585-609 (LQHL…MEDL), 633-657 (FKKL…IGSL), 683-706 (LTNL…ELDS), 763-786 (LPML…FWGN), and 798-824 (LSSL…VTAN).

This sequence belongs to the disease resistance NB-LRR family. RPP13 subfamily. In terms of assembly, interacts with ZED1/ZRK5. Component of a stable high-order oligomeric complex made of RKS1 and RPP13L4/ZAR1 which recruits ZED1-related kinases (e.g. uridylylated PBL2 and acetylated ZED1/ZRK5) in the presence of ATP and pathogenic bacteria type III secreted effector (T3SE) proteins (e.g. Pseudomonas syringae HopZ1a and HopF2a and Xanthomonas campestris pv. campestris (Xcc) XopAC/AvrAC) to form a wheel-like pentameric resistosome; this complex triggers immunity toward pathogenic bacteria (e.g. X.campestris and P.syringae), especially in vascular tissues. Interacts with RKS1, ZED1/ZRK5, ZRK3, ZRK6 and ZRK15.

It localises to the cell membrane. The protein resides in the nucleus. Exhibits autoinhibition activity. CC-NB-LRR receptor-like protein required for recognition of pathogenic bacteria type III effectors (T3E) such as Pseudomonas syringae HopZ1a and HopF2a and Xanthomonas campestris pv. campestris (Xcc) XopAC/AvrAC; this recognition requires ZED1-related kinases (e.g. PBL2, ZRK3 and ZED1/ZRK5). Confers allele-specific recognition and virulence attenuation of HopZ1a. Immunity mediated by RPP13L4/ZAR1 is independent of several genes required by other resistance protein signaling pathways such as NDR1 and RAR1. Together with ZED1/ZRK5, involved in the regulation of the ambient temperature-sensitive intersection of growth and immune response in the absence of pathogens. This Arabidopsis thaliana (Mouse-ear cress) protein is Disease resistance RPP13-like protein 4 (RPP13L4).